The following is a 251-amino-acid chain: Flap endonuclease Xni (251 aa).

A Mg(2+)-binding site is contributed by aspartate 104. Residues valine 160–leucine 249 form the 5'-3' exonuclease domain. Positions 171, 172, 180, 182, and 185 each coordinate K(+). The interaction with DNA stretch occupies residues glycine 184–serine 189.

It belongs to the Xni family. Requires Mg(2+) as cofactor. K(+) serves as cofactor.

In terms of biological role, has flap endonuclease activity. During DNA replication, flap endonucleases cleave the 5'-overhanging flap structure that is generated by displacement synthesis when DNA polymerase encounters the 5'-end of a downstream Okazaki fragment. The chain is Flap endonuclease Xni from Cronobacter sakazakii (strain ATCC BAA-894) (Enterobacter sakazakii).